Here is a 155-residue protein sequence, read N- to C-terminus: Interleukin-36 receptor antagonist protein (155 aa).

The cysteines at positions 8 and 154 are disulfide-linked.

Belongs to the IL-1 family. As to quaternary structure, interacts with cargo receptor TMED10; the interaction mediates the translocation from the cytoplasm into the ERGIC (endoplasmic reticulum-Golgi intermediate compartment) and thereby secretion. In terms of tissue distribution, predominantly expressed in skin keratinocytes but not in fibroblasts, endothelial cells or melanocytes. Detected also in the spleen, brain leukocyte and macrophage cell types. Increased in lesional psoriasis skin.

It localises to the cytoplasm. Its subcellular location is the secreted. Functionally, inhibits the activity of interleukin-36 (IL36A,IL36B and IL36G) by binding to receptor IL1RL2 and preventing its association with the coreceptor IL1RAP for signaling. Part of the IL-36 signaling system that is thought to be present in epithelial barriers and to take part in local inflammatory response; similar to the IL-1 system with which it shares the coreceptor. Proposed to play a role in skin inflammation. May be involved in the innate immune response to fungal pathogens, such as Aspergillus fumigatus. May activate an anti-inflammatory signaling pathway by recruiting SIGIRR. This Homo sapiens (Human) protein is Interleukin-36 receptor antagonist protein.